The sequence spans 208 residues: dITP/XTP pyrophosphatase (208 aa).

A substrate-binding site is contributed by 16–21 (TGNAGK). Residues Glu46 and Asp75 each coordinate Mg(2+). Asp75 functions as the Proton acceptor in the catalytic mechanism. Residues Ser76, 155-158 (FGYD), Lys178, and 183-184 (HR) contribute to the substrate site.

The protein belongs to the HAM1 NTPase family. In terms of assembly, homodimer. Requires Mg(2+) as cofactor.

The catalysed reaction is XTP + H2O = XMP + diphosphate + H(+). It carries out the reaction dITP + H2O = dIMP + diphosphate + H(+). The enzyme catalyses ITP + H2O = IMP + diphosphate + H(+). Pyrophosphatase that catalyzes the hydrolysis of nucleoside triphosphates to their monophosphate derivatives, with a high preference for the non-canonical purine nucleotides XTP (xanthosine triphosphate), dITP (deoxyinosine triphosphate) and ITP. Seems to function as a house-cleaning enzyme that removes non-canonical purine nucleotides from the nucleotide pool, thus preventing their incorporation into DNA/RNA and avoiding chromosomal lesions. This Deinococcus deserti (strain DSM 17065 / CIP 109153 / LMG 22923 / VCD115) protein is dITP/XTP pyrophosphatase.